The following is a 249-amino-acid chain: MPPRKIKKDPAVVAMADTLETRVKDLLEEYKKKLREVALQTAKAESDRIIATIKPKYRDMPIMEFLASPPDDFYIESGEEEEEGEAAVAVKQELPSEPDMEIDDAAAAQKTSIPIGQNSGRNTVQVKQEPEIDDDAAHETSIPIAPSGQNSGRNTAADEHRRNEIITPAGQVLPLPTLQPEKPFRAPHVDEEIAFSVNGSPLVLAGRTTATAAGKENRKKSKKSGAASKKAAAAAGPLQPETENAGTSV.

Residues 12–48 (VVAMADTLETRVKDLLEEYKKKLREVALQTAKAESDR) adopt a coiled-coil conformation. Disordered stretches follow at residues 70 to 89 (PDDF…AAVA), 94 to 183 (LPSE…PEKP), and 208 to 249 (TTAT…GTSV). Over residues 73–85 (FYIESGEEEEEGE) the composition is skewed to acidic residues. Over residues 109–126 (QKTSIPIGQNSGRNTVQV) the composition is skewed to polar residues. Positions 224 to 236 (SGAASKKAAAAAG) are enriched in low complexity.

The protein belongs to the borealin family. Highly divergent. Component of the CPC complex which consists of icp-1; csc-1; bir-1 and air-2. Within the complex interacts with Aurora B/air-2, bir-1 and icp-1.

Its subcellular location is the nucleus. It is found in the chromosome. It localises to the centromere. The protein localises to the cytoplasm. The protein resides in the cytoskeleton. Its subcellular location is the spindle. Functionally, component of the chromosomal passenger complex (CPC), a complex that acts as a key regulator of chromosome segregation and cytokinesis during mitosis. The CPC complex has essential functions at the centromere in ensuring correct chromosome alignment and segregation. In the complex, it may be required to direct the Aurora B/air-2 to centromeric DNA. The protein is Chromosome segregation and cytokinesis defective protein 1 (csc-1) of Caenorhabditis elegans.